The primary structure comprises 361 residues: Phospho-N-acetylmuramoyl-pentapeptide-transferase (361 aa).

The next 10 helical transmembrane spans lie at 28–48, 74–94, 99–119, 133–153, 168–188, 203–223, 236–256, 263–283, 288–308, and 338–358; these read LAIIITLSLSFITGPILIKFL, TMGGIMIILSSCLSTLLLADL, IWITLFGFISFGIIGFMDDYA, SKLLLQGIISFIICVLLEYLD, LSLDLGYFYIVFAMFVIVGSS, VPIAFTAGSFALISYLVGNLI, TGELTVLCAGLVGSCLGFLWF, VFMGDTGSLSLGGVLGIISVI, IVLAIVGGLFVIETTSVILQV, and KVVIRFWIISVIFALIGLSSL.

The protein belongs to the glycosyltransferase 4 family. MraY subfamily. It depends on Mg(2+) as a cofactor.

The protein resides in the cell membrane. The enzyme catalyses UDP-N-acetyl-alpha-D-muramoyl-L-alanyl-gamma-D-glutamyl-meso-2,6-diaminopimeloyl-D-alanyl-D-alanine + di-trans,octa-cis-undecaprenyl phosphate = di-trans,octa-cis-undecaprenyl diphospho-N-acetyl-alpha-D-muramoyl-L-alanyl-D-glutamyl-meso-2,6-diaminopimeloyl-D-alanyl-D-alanine + UMP. Its pathway is cell wall biogenesis; peptidoglycan biosynthesis. In terms of biological role, catalyzes the initial step of the lipid cycle reactions in the biosynthesis of the cell wall peptidoglycan: transfers peptidoglycan precursor phospho-MurNAc-pentapeptide from UDP-MurNAc-pentapeptide onto the lipid carrier undecaprenyl phosphate, yielding undecaprenyl-pyrophosphoryl-MurNAc-pentapeptide, known as lipid I. The protein is Phospho-N-acetylmuramoyl-pentapeptide-transferase of Rickettsia montanensis.